Consider the following 357-residue polypeptide: MKKRTFALALSMIIASGVILGACGSSSDDKKSSDDKSSKDFTVAMVTDTGGVDDRSFNQSAWEGLQKFGKANDMEKGTDGYNYLQSASEADYKTNLNTAVRSDYDLIYGIGYKLKDAIEEVSKQKPKNQFAIVDDTIDDRDNVVSIGFKDNDGSYLVGVVAGLTTKTNKVGFVGGVKGTVIDRFEAGFTAGVKAVNPNAQIDVQYANDFAKADKGQQIASSMYSSGVDVIFHAAGGTGNGVFAEAKNLKKKDPSRAVWVIGVDRDQWDEGKVTANDGKDYNVTLTSEIKRVDIAVEDLATRAKAGDFPGGTKIEYGLDKDAVGLSEHQDNISKDVLAKVEEYKQKIVDGDIKVPEKP.

The N-terminal stretch at 1–22 (MKKRTFALALSMIIASGVILGA) is a signal peptide. Cys23 is lipidated: N-palmitoyl cysteine. Residue Cys23 is the site of S-diacylglycerol cysteine attachment.

Belongs to the BMP lipoprotein family.

It localises to the cell membrane. The sequence is that of CD4+ T-cell-stimulating antigen (tcsA) from Listeria monocytogenes serovar 1/2a (strain ATCC BAA-679 / EGD-e).